The sequence spans 698 residues: Protein artemis (698 aa).

A Phosphothreonine modification is found at Thr-380. At Ser-385 the chain carries Phosphoserine. Disordered regions lie at residues 445 to 485, 505 to 595, and 620 to 669; these read ANFV…DPDV, LENL…DSIS, and NGVP…LPKP. Positions 449–461 are enriched in acidic residues; it reads DCDESNSDSEGEL. Residues 508–521 show a composition bias toward polar residues; the sequence is LPSSIETGGSQSPK. Residues 538–551 are compositionally biased toward low complexity; that stretch reads THISSQNSSQSTHI. Residues 552-583 are compositionally biased toward polar residues; sequence TDQGSQGWDSQCDTVLLSSQEKSGGDSTSLNK. Residues 641-655 show a composition bias toward low complexity; it reads TSLTSTQADSQSSSD. The residue at position 650 (Ser-650) is a Phosphoserine; by ATM.

The protein belongs to the DNA repair metallo-beta-lactamase (DRMBL) family. In terms of assembly, interacts with LIG4; the interaction is direct. Interacts with ATM. Interacts with BRCA1. Interacts with PRKDC. Interacts with TP53BP1. Also exhibits ATM- and phosphorylation-dependent interaction with the MRN complex, composed of MRE11, RAD50, and NBN. Post-translationally, phosphorylation on undefined residues by PRKDC may stimulate endonucleolytic activity on 5' and 3' hairpins and overhangs. PRKDC must remain present, even after phosphorylation, for efficient hairpin opening. Also phosphorylated by ATM in response to ionizing radiation (IR) and by ATR in response to ultraviolet (UV) radiation.

It is found in the nucleus. Its function is as follows. Required for V(D)J recombination, the process by which exons encoding the antigen-binding domains of immunoglobulins and T-cell receptor proteins are assembled from individual V, (D), and J gene segments. V(D)J recombination is initiated by the lymphoid specific RAG endonuclease complex, which generates site specific DNA double strand breaks (DSBs). These DSBs present two types of DNA end structures: hairpin sealed coding ends and phosphorylated blunt signal ends. These ends are independently repaired by the non homologous end joining (NHEJ) pathway to form coding and signal joints respectively. This protein exhibits single-strand specific 5'-3' exonuclease activity in isolation, and acquires endonucleolytic activity on 5' and 3' hairpins and overhangs when in a complex with PRKDC. The latter activity is required specifically for the resolution of closed hairpins prior to the formation of the coding joint. May also be required for the repair of complex DSBs induced by ionizing radiation, which require substantial end-processing prior to religation by NHEJ. The chain is Protein artemis (Dclre1c) from Rattus norvegicus (Rat).